Consider the following 294-residue polypeptide: Complement C1q tumor necrosis factor-related protein 2 (294 aa).

A signal peptide spans M1–A24. Residues Q42–R156 form a disordered region. In terms of domain architecture, Collagen-like spans P48–C150. Pro residues predominate over residues P50 to A59. Residues D75–S87 are compositionally biased toward basic and acidic residues. The segment covering K105 to H129 has biased composition (low complexity). Residues S154–D290 enclose the C1q domain.

As to quaternary structure, may interact with ERFE.

It localises to the secreted. Functionally, involved in the regulation of lipid metabolism in adipose tissue and liver. This Mus musculus (Mouse) protein is Complement C1q tumor necrosis factor-related protein 2 (C1qtnf2).